The following is a 448-amino-acid chain: N-succinylarginine dihydrolase (448 aa).

Residues 19-28, N110, and 137-138 each bind substrate; these read GGLSYGNVAS and HR. Residue E174 is part of the active site. Position 214 (R214) interacts with substrate. Residue H250 is part of the active site. Substrate is bound by residues D252 and N365. Catalysis depends on C371, which acts as the Nucleophile.

It belongs to the succinylarginine dihydrolase family. In terms of assembly, homodimer.

The enzyme catalyses N(2)-succinyl-L-arginine + 2 H2O + 2 H(+) = N(2)-succinyl-L-ornithine + 2 NH4(+) + CO2. It functions in the pathway amino-acid degradation; L-arginine degradation via AST pathway; L-glutamate and succinate from L-arginine: step 2/5. Functionally, catalyzes the hydrolysis of N(2)-succinylarginine into N(2)-succinylornithine, ammonia and CO(2). The polypeptide is N-succinylarginine dihydrolase (Pseudomonas syringae pv. syringae (strain B728a)).